The following is a 331-amino-acid chain: Pyrimidine monooxygenase RutA (331 aa).

FMN contacts are provided by residues 79–80, Asn-145, Glu-154, 170–171, and Ser-220; these read IK and RY. Residues 300–331 form a disordered region; the sequence is WLTEQSQKDTRSGTDTNVRQMADPTSASAFNH. Residues 312 to 331 show a composition bias toward polar residues; it reads GTDTNVRQMADPTSASAFNH.

Belongs to the NtaA/SnaA/DszA monooxygenase family. RutA subfamily.

The catalysed reaction is uracil + FMNH2 + NADH + O2 = (Z)-3-ureidoacrylate + FMN + NAD(+) + H2O + H(+). The enzyme catalyses thymine + FMNH2 + NADH + O2 = (Z)-2-methylureidoacrylate + FMN + NAD(+) + H2O + H(+). In terms of biological role, catalyzes the pyrimidine ring opening between N-3 and C-4 by an unusual flavin hydroperoxide-catalyzed mechanism, adding oxygen atoms in the process to yield ureidoacrylate peracid, that immediately reacts with FMN forming ureidoacrylate and FMN-N(5)-oxide. The FMN-N(5)-oxide reacts spontaneously with NADH to produce FMN. Requires the flavin reductase RutF to regenerate FMN in vivo. The protein is Pyrimidine monooxygenase RutA of Escherichia coli O7:K1 (strain IAI39 / ExPEC).